We begin with the raw amino-acid sequence, 249 residues long: uncharacterized protein (249 aa).

It localises to the cytoplasm. The protein localises to the nucleus. This is an uncharacterized protein from Schizosaccharomyces pombe (strain 972 / ATCC 24843) (Fission yeast).